A 360-amino-acid polypeptide reads, in one-letter code: tRNA-specific 2-thiouridylase MnmA (360 aa).

Residues Ala-9–Ser-16 and Leu-35 contribute to the ATP site. Cys-104 (nucleophile) is an active-site residue. An intrachain disulfide couples Cys-104 to Cys-197. An ATP-binding site is contributed by Gly-128. Residues Lys-147 to Gln-149 form an interaction with tRNA region. Cys-197 serves as the catalytic Cysteine persulfide intermediate.

Belongs to the MnmA/TRMU family.

Its subcellular location is the cytoplasm. The catalysed reaction is S-sulfanyl-L-cysteinyl-[protein] + uridine(34) in tRNA + AH2 + ATP = 2-thiouridine(34) in tRNA + L-cysteinyl-[protein] + A + AMP + diphosphate + H(+). In terms of biological role, catalyzes the 2-thiolation of uridine at the wobble position (U34) of tRNA, leading to the formation of s(2)U34. This Salinispora arenicola (strain CNS-205) protein is tRNA-specific 2-thiouridylase MnmA.